The following is an 847-amino-acid chain: Alanine--tRNA ligase (847 aa).

Zn(2+)-binding residues include His-554, His-558, Cys-656, and His-660.

It belongs to the class-II aminoacyl-tRNA synthetase family. Zn(2+) is required as a cofactor.

The protein resides in the cytoplasm. It catalyses the reaction tRNA(Ala) + L-alanine + ATP = L-alanyl-tRNA(Ala) + AMP + diphosphate. Catalyzes the attachment of alanine to tRNA(Ala) in a two-step reaction: alanine is first activated by ATP to form Ala-AMP and then transferred to the acceptor end of tRNA(Ala). Also edits incorrectly charged Ser-tRNA(Ala) and Gly-tRNA(Ala) via its editing domain. In Helicobacter pylori (strain HPAG1), this protein is Alanine--tRNA ligase.